The sequence spans 754 residues: Endothelin-converting enzyme 1 (754 aa).

Over 1-52 (MMSTYKRATLDEEDLVDSLSESDVYPNHLQVNFRGPRNGQRCWAARTPVEKR) the chain is Cytoplasmic. A Phosphothreonine modification is found at threonine 9. Residues 53-73 (LVVLVALLAAALVACLAVLGI) form a helical; Signal-anchor for type II membrane protein membrane-spanning segment. The Extracellular portion of the chain corresponds to 74–754 (QYQTRTPSVC…MNPHHKCEVW (681 aa)). The 673-residue stretch at 82 to 754 (VCLSEACISV…MNPHHKCEVW (673 aa)) folds into the Peptidase M13 domain. 5 disulfide bridges follow: cysteine 83–cysteine 88, cysteine 106–cysteine 739, cysteine 114–cysteine 699, cysteine 169–cysteine 419, and cysteine 628–cysteine 751. Residues asparagine 150, asparagine 171, asparagine 194, asparagine 254, asparagine 300, asparagine 346, asparagine 367, and asparagine 523 are each glycosylated (N-linked (GlcNAc...) asparagine). Histidine 591 provides a ligand contact to Zn(2+). Glutamate 592 is an active-site residue. Histidine 595 contacts Zn(2+). Residues asparagine 616 and asparagine 635 are each glycosylated (N-linked (GlcNAc...) asparagine). Position 651 (glutamate 651) interacts with Zn(2+). The active-site Proton donor is the aspartate 655.

Belongs to the peptidase M13 family. Homodimer; disulfide-linked. Interacts with PPP1R16B. Interacts with TSPAN8; this interaction recruits the endothelin converting enzyme ECE1 to tetraspanin-enriched microdomains and positively modulates its enzymatic activity. Requires Zn(2+) as cofactor.

It is found in the cell membrane. It carries out the reaction Hydrolysis of the 21-Trp-|-Val-22 bond in big endothelin to form endothelin 1.. Its activity is regulated as follows. Inhibited by phosphoramidon. Converts big endothelin-1 to endothelin-1. The chain is Endothelin-converting enzyme 1 (ECE1) from Bos taurus (Bovine).